A 393-amino-acid chain; its full sequence is Formate-dependent phosphoribosylglycinamide formyltransferase (393 aa).

N(1)-(5-phospho-beta-D-ribosyl)glycinamide is bound by residues 22-23 and Glu-82; that span reads EL. ATP is bound by residues Arg-114, Lys-155, 160-165, 195-198, and Glu-203; these read SSGKGQ and EGFI. One can recognise an ATP-grasp domain in the interval 119–308; that stretch reads RLAAEELKLP…QFALHARAIL (190 aa). Glu-267 and Glu-279 together coordinate Mg(2+). N(1)-(5-phospho-beta-D-ribosyl)glycinamide is bound by residues Asp-286, Lys-356, and 363–364; that span reads RR.

It belongs to the PurK/PurT family. In terms of assembly, homodimer.

The enzyme catalyses N(1)-(5-phospho-beta-D-ribosyl)glycinamide + formate + ATP = N(2)-formyl-N(1)-(5-phospho-beta-D-ribosyl)glycinamide + ADP + phosphate + H(+). Its pathway is purine metabolism; IMP biosynthesis via de novo pathway; N(2)-formyl-N(1)-(5-phospho-D-ribosyl)glycinamide from N(1)-(5-phospho-D-ribosyl)glycinamide (formate route): step 1/1. Functionally, involved in the de novo purine biosynthesis. Catalyzes the transfer of formate to 5-phospho-ribosyl-glycinamide (GAR), producing 5-phospho-ribosyl-N-formylglycinamide (FGAR). Formate is provided by PurU via hydrolysis of 10-formyl-tetrahydrofolate. The protein is Formate-dependent phosphoribosylglycinamide formyltransferase of Pseudomonas savastanoi pv. phaseolicola (strain 1448A / Race 6) (Pseudomonas syringae pv. phaseolicola (strain 1448A / Race 6)).